We begin with the raw amino-acid sequence, 239 residues long: Sugar fermentation stimulation protein homolog (239 aa).

The protein belongs to the SfsA family.

The protein is Sugar fermentation stimulation protein homolog of Rhizobium meliloti (strain 1021) (Ensifer meliloti).